Consider the following 457-residue polypeptide: 1-carboxybiuret hydrolase subunit AtzE (457 aa).

Active-site charge relay system residues include Lys-74 and Ser-150. Ser-174 serves as the catalytic Acyl-ester intermediate.

This sequence belongs to the amidase family. In terms of assembly, heterotetramer consisting of 2 AtzE and 2 AtzG subunits.

The enzyme catalyses 1-carboxybiuret + H2O = urea-1,3-dicarboxylate + NH4(+). It functions in the pathway xenobiotic degradation; atrazine degradation. Its function is as follows. Hydrolyzes 1-carboxybiuret to urea-1,3-dicarboxylate and NH(3). This is 1-carboxybiuret hydrolase subunit AtzE from Pseudomonas sp. (strain ADP).